A 2631-amino-acid polypeptide reads, in one-letter code: Cyclic GMP-binding protein C (2631 aa).

6 LRR repeats span residues 170–194 (TAQI…IFSL), 196–217 (WIQK…IGKL), 218–240 (QQLQ…IGDL), 242–262 (NLKR…LERL), 263–285 (SKLE…IASL), and 287–308 (SLKT…VVSK). The Roc domain occupies 323–515 (GARPCLRSKL…QLIEDIIKTQ (193 aa)). Residues 336–343 (GDPGVGKT), 402–406 (DIANQ), and 458–461 (THID) contribute to the GTP site. Positions 523-741 (PSSFFTLEEA…ESCQKRAVIL (219 aa)) constitute a COR domain. One can recognise a Protein kinase domain in the interval 878–1172 (VKINKEVGRG…KKKFAPLPFT (295 aa)). ATP-binding positions include 884-892 (VGRGAFGIV) and Lys905. Asp1023 functions as the Proton acceptor in the catalytic mechanism. Positions 1225–1250 (ISLTSSGTSPTNSPVGGLLSQSLTQP) are enriched in polar residues. 2 disordered regions span residues 1225–1263 (ISLT…ILST) and 1387–1418 (SSAT…RNSV). Low complexity predominate over residues 1251–1263 (ITSGGSTSGILST). The 174-residue stretch at 1366–1539 (SVSIIIAATM…QIYGTLTTHE (174 aa)) folds into the N-terminal Ras-GEF domain. Basic and acidic residues predominate over residues 1392 to 1404 (KSEHISTRRRSDT). The region spanning 1620-1706 (PLLGITVKEK…SPTSFYMFLE (87 aa)) is the DEP domain. The 264-residue stretch at 1708 to 1971 (DPELIARQYT…DLKALDSLQI (264 aa)) folds into the Ras-GEF domain. Residues 1989 to 2013 (GTTNDDKEKGDENGGGLTSSNFFGN) form a disordered region. An a nucleoside 3',5'-cyclic phosphate-binding site is contributed by 2014 to 2133 (GSDELTERDW…AKFYKIMANQ (120 aa)). 3 disordered regions span residues 2142–2180 (PWSK…GGGL), 2192–2239 (MSLS…TTTD), and 2263–2346 (SANL…GQQP). A compositionally biased stretch (low complexity) spans 2144 to 2174 (SKPKNTTGGSSSSNQSAGPDNILGTTPTGIS). Residues 2212 to 2221 (LPSPPAPLQS) show a composition bias toward pro residues. Residues 2222–2238 (PPTSGISSPTTTTSTTT) are compositionally biased toward low complexity. Positions 2287 to 2299 (TINKDPHQRDSGS) are enriched in basic and acidic residues. Over residues 2321 to 2336 (GSISYLGRTQTSTSPL) the composition is skewed to polar residues. One can recognise a GRAM domain in the interval 2354-2414 (EFCQRFALVD…KNIDKLICIN (61 aa)). An a nucleoside 3',5'-cyclic phosphate-binding site is contributed by 2490 to 2616 (GDELTKEDWE…ASKWFKYLAT (127 aa)).

It belongs to the protein kinase superfamily. TKL Ser/Thr protein kinase family. ROCO subfamily.

The enzyme catalyses L-seryl-[protein] + ATP = O-phospho-L-seryl-[protein] + ADP + H(+). The catalysed reaction is L-threonyl-[protein] + ATP = O-phospho-L-threonyl-[protein] + ADP + H(+). In terms of biological role, promotes the exchange of Ras-bound GDP by GTP. Required for cyclic GMP-mediated chemotaxis, polarity. Plays a key role in cyclic AMP-induced myosin II translocation to the cortex. Also involved in the phosphorylation of mlkA and mlcR, either directly or via an intermediate kinase. This Dictyostelium discoideum (Social amoeba) protein is Cyclic GMP-binding protein C (gbpC).